The chain runs to 302 residues: tRNA pseudouridine synthase B (302 aa).

D45 functions as the Nucleophile in the catalytic mechanism.

It belongs to the pseudouridine synthase TruB family. Type 1 subfamily.

It carries out the reaction uridine(55) in tRNA = pseudouridine(55) in tRNA. Its function is as follows. Responsible for synthesis of pseudouridine from uracil-55 in the psi GC loop of transfer RNAs. This is tRNA pseudouridine synthase B from Francisella tularensis subsp. tularensis (strain WY96-3418).